The primary structure comprises 428 residues: Adenylosuccinate synthetase (428 aa).

GTP is bound by residues 12–18 (GDEGKGK) and 40–42 (GHT). The active-site Proton acceptor is Asp13. Residues Asp13 and Gly40 each coordinate Mg(2+). Residues 13–16 (DEGK), 38–41 (NAGH), Thr130, Arg144, Gln225, Thr240, and Arg304 each bind IMP. His41 (proton donor) is an active-site residue. Position 300–306 (300–306 (VTTGRAR)) interacts with substrate. GTP contacts are provided by residues Arg306, 332–334 (KID), and 414–416 (SVG).

Belongs to the adenylosuccinate synthetase family. In terms of assembly, homodimer. Mg(2+) is required as a cofactor.

It is found in the cytoplasm. It catalyses the reaction IMP + L-aspartate + GTP = N(6)-(1,2-dicarboxyethyl)-AMP + GDP + phosphate + 2 H(+). The protein operates within purine metabolism; AMP biosynthesis via de novo pathway; AMP from IMP: step 1/2. Functionally, plays an important role in the de novo pathway of purine nucleotide biosynthesis. Catalyzes the first committed step in the biosynthesis of AMP from IMP. The protein is Adenylosuccinate synthetase of Clostridium botulinum (strain Okra / Type B1).